The following is a 151-amino-acid chain: Large ribosomal subunit protein bL9 (151 aa).

The protein belongs to the bacterial ribosomal protein bL9 family.

In terms of biological role, binds to the 23S rRNA. This Dehalococcoides mccartyi (strain ATCC BAA-2100 / JCM 16839 / KCTC 5957 / BAV1) protein is Large ribosomal subunit protein bL9.